Here is a 662-residue protein sequence, read N- to C-terminus: Probable protein phosphatase 2C 4 (662 aa).

Position 153 is a phosphoserine (serine 153). Positions 249–653 (DVSLENQNLQ…DDVSIVVISL (405 aa)) constitute a PPM-type phosphatase domain. Mn(2+) contacts are provided by aspartate 286, glycine 287, aspartate 581, and aspartate 644.

The protein belongs to the PP2C family. Mg(2+) serves as cofactor. Requires Mn(2+) as cofactor. As to expression, expressed in seedlings, roots, leaves, stems, young inflorescences, flowers and siliques.

It is found in the nucleus. The catalysed reaction is O-phospho-L-seryl-[protein] + H2O = L-seryl-[protein] + phosphate. The enzyme catalyses O-phospho-L-threonyl-[protein] + H2O = L-threonyl-[protein] + phosphate. Its function is as follows. Involved in leaf development regulation. The sequence is that of Probable protein phosphatase 2C 4 (PLL5) from Arabidopsis thaliana (Mouse-ear cress).